Reading from the N-terminus, the 607-residue chain is Chaperone protein dnaK (607 aa).

Residues 579–591 (KASETSNAKTNGK) are compositionally biased toward polar residues. The segment at 579–607 (KASETSNAKTNGKASEKEDVIDADFKAQE) is disordered. The segment covering 592 to 607 (ASEKEDVIDADFKAQE) has biased composition (basic and acidic residues).

This sequence belongs to the heat shock protein 70 family.

It localises to the plastid. It is found in the chloroplast. Acts as a chaperone. This Cyanidioschyzon merolae (strain NIES-3377 / 10D) (Unicellular red alga) protein is Chaperone protein dnaK.